A 166-amino-acid chain; its full sequence is NADH-quinone oxidoreductase subunit C (166 aa).

Belongs to the complex I 30 kDa subunit family. NDH-1 is composed of 14 different subunits. Subunits NuoB, C, D, E, F, and G constitute the peripheral sector of the complex.

The protein localises to the cell inner membrane. It carries out the reaction a quinone + NADH + 5 H(+)(in) = a quinol + NAD(+) + 4 H(+)(out). Its function is as follows. NDH-1 shuttles electrons from NADH, via FMN and iron-sulfur (Fe-S) centers, to quinones in the respiratory chain. The immediate electron acceptor for the enzyme in this species is believed to be a menaquinone. Couples the redox reaction to proton translocation (for every two electrons transferred, four hydrogen ions are translocated across the cytoplasmic membrane), and thus conserves the redox energy in a proton gradient. The protein is NADH-quinone oxidoreductase subunit C of Chlorobium phaeobacteroides (strain DSM 266 / SMG 266 / 2430).